The following is a 911-amino-acid chain: Nitrate reductase [NADH], clone PBNBR1412 (911 aa).

The tract at residues 53 to 72 is disordered; the sequence is NDAVDDSYDSSDDEDESHNR. Over residues 56–68 the composition is skewed to acidic residues; it reads VDDSYDSSDDEDE. Cys191 is a Mo-molybdopterin binding site. Residues 539–614 form the Cytochrome b5 heme-binding domain; that stretch reads AKMYSMSEVR…LEDYRIGELI (76 aa). The heme site is built by His574 and His597. The region spanning 654–766 is the FAD-binding FR-type domain; it reads REKVPVTLIE…KGPLGHIEYL (113 aa). FAD is bound by residues 706–709, 723–727, Phe728, Phe735, 740–742, and Thr793; these read RAYT, VVKVY, and LMS.

It belongs to the nitrate reductase family. As to quaternary structure, homodimer. FAD serves as cofactor. The cofactor is heme. Requires Mo-molybdopterin as cofactor.

It carries out the reaction nitrite + NAD(+) + H2O = nitrate + NADH + H(+). Functionally, nitrate reductase is a key enzyme involved in the first step of nitrate assimilation in plants, fungi and bacteria. The sequence is that of Nitrate reductase [NADH], clone PBNBR1412 (NIA2) from Brassica napus (Rape).